Reading from the N-terminus, the 856-residue chain is Leucine--tRNA ligase (856 aa).

Positions 53–63 (PYPSGNLHMGH) match the 'HIGH' region motif. The 'KMSKS' region motif lies at 622–626 (KMSKS). K625 lines the ATP pocket.

Belongs to the class-I aminoacyl-tRNA synthetase family.

The protein resides in the cytoplasm. It carries out the reaction tRNA(Leu) + L-leucine + ATP = L-leucyl-tRNA(Leu) + AMP + diphosphate. The sequence is that of Leucine--tRNA ligase from Prochlorococcus marinus (strain MIT 9215).